The sequence spans 428 residues: Serine--tRNA ligase (428 aa).

Position 235–237 (235–237 (TAE)) interacts with L-serine. 266-268 (RSE) lines the ATP pocket. Glu-289 contacts L-serine. 353–356 (EISS) is a binding site for ATP. Ser-389 provides a ligand contact to L-serine.

Belongs to the class-II aminoacyl-tRNA synthetase family. Type-1 seryl-tRNA synthetase subfamily. As to quaternary structure, homodimer. The tRNA molecule binds across the dimer.

The protein resides in the cytoplasm. The enzyme catalyses tRNA(Ser) + L-serine + ATP = L-seryl-tRNA(Ser) + AMP + diphosphate + H(+). It carries out the reaction tRNA(Sec) + L-serine + ATP = L-seryl-tRNA(Sec) + AMP + diphosphate + H(+). Its pathway is aminoacyl-tRNA biosynthesis; selenocysteinyl-tRNA(Sec) biosynthesis; L-seryl-tRNA(Sec) from L-serine and tRNA(Sec): step 1/1. In terms of biological role, catalyzes the attachment of serine to tRNA(Ser). Is also able to aminoacylate tRNA(Sec) with serine, to form the misacylated tRNA L-seryl-tRNA(Sec), which will be further converted into selenocysteinyl-tRNA(Sec). The chain is Serine--tRNA ligase from Shewanella amazonensis (strain ATCC BAA-1098 / SB2B).